The following is a 176-amino-acid chain: Putative metal-dependent hydrolase BLi00869/BLi00870/BL03027 (176 aa).

Zn(2+) is bound by residues histidine 65, histidine 158, and histidine 162.

The protein belongs to the metal hydrolase YfiT family. In terms of assembly, homodimer. It depends on Zn(2+) as a cofactor.

It localises to the cytoplasm. Possible metal-dependent hydrolase. This Bacillus licheniformis (strain ATCC 14580 / DSM 13 / JCM 2505 / CCUG 7422 / NBRC 12200 / NCIMB 9375 / NCTC 10341 / NRRL NRS-1264 / Gibson 46) protein is Putative metal-dependent hydrolase BLi00869/BLi00870/BL03027.